Here is a 377-residue protein sequence, read N- to C-terminus: Leukocyte elastase inhibitor (377 aa).

Met1 carries the N-acetylmethionine modification. N6-acetyllysine is present on Lys136. Ser298 carries the post-translational modification Phosphoserine. Residues 349 to 377 are CARD-binding motif (CBM); the sequence is EFVADHPFIFFIRHKPSSNILFLGRLSSP.

Belongs to the serpin family. Ov-serpin subfamily. As to quaternary structure, monomer. Interacts (via C-terminus) with CASP1; CASP4 (via CARD domain) and CASP5; these interactions regulate the activity of inflammatory caspases. Interacts with PRTN3. Interacts with GZMH.

Its subcellular location is the secreted. The protein resides in the cytoplasm. The protein localises to the cytolytic granule. It is found in the early endosome. In terms of biological role, neutrophil serine protease inhibitor that plays an essential role in the regulation of the innate immune response, inflammation and cellular homeostasis. Acts primarily to protect the cell from proteases released in the cytoplasm during stress or infection. These proteases are important in killing microbes but when released from granules, these potent enzymes also destroy host proteins and contribute to mortality. Regulates the activity of the neutrophil proteases elastase, cathepsin G, proteinase-3, chymase, chymotrypsin, and kallikrein-3. Also acts as a potent intracellular inhibitor of GZMH by directly blocking its proteolytic activity. During inflammation, limits the activity of inflammatory caspases CASP1, CASP4 and CASP5 by suppressing their caspase-recruitment domain (CARD) oligomerization and enzymatic activation. When secreted, promotes the proliferation of beta-cells via its protease inhibitory function. The sequence is that of Leukocyte elastase inhibitor (SERPINB1) from Bos taurus (Bovine).